The sequence spans 796 residues: AUGMIN subunit 5 (796 aa).

The segment at 79–120 is disordered; that stretch reads HGGSSNASIGSSVNPGKEESKSKGRRKDKTVTGESSSYAEDR. Residues 80 to 92 show a composition bias toward polar residues; it reads GGSSNASIGSSVN. Coiled-coil stretches lie at residues 115–191 and 462–501; these read SYAE…EATR and GKEREAAGLRASLNTLLSEIQRLNKLCAERKEAEDSLKKK.

It belongs to the HAUS5 family. As to quaternary structure, part of the augmin complex composed of 8 subunits. The complex acts on microtubules and interacts with gamma-tubulin in spindles and the phragmoplast.

The protein localises to the cytoplasm. The protein resides in the cytoskeleton. It localises to the spindle. Its subcellular location is the phragmoplast. Involved in microtubules reorganization during spindle and phragmoplast development. This Arabidopsis thaliana (Mouse-ear cress) protein is AUGMIN subunit 5.